The primary structure comprises 866 residues: DNA topoisomerase 3-beta (866 aa).

Residues 4–149 (TVLMVAEKPS…RIFRAKFSSV (146 aa)) form the Toprim domain. Residues glutamate 10, aspartate 114, and aspartate 116 each coordinate Mg(2+). The region spanning 165–585 (SKDEALAVDA…HVLQQFMKKY (421 aa)) is the Topo IA-type catalytic domain. Residues 207 to 212 (SYGPCQ) are interaction with DNA. Residue tyrosine 329 is the O-(5'-phospho-DNA)-tyrosine intermediate of the active site. Residues 830 to 853 (MRRGRGRGRGRGRGRGSSRGRRGS) are compositionally biased toward basic residues. The segment at 830 to 866 (MRRGRGRGRGRGRGRGSSRGRRGSSRHDDPKMSFRDF) is disordered. Residues 854-866 (SRHDDPKMSFRDF) are compositionally biased toward basic and acidic residues.

Belongs to the type IA topoisomerase family. Requires Mg(2+) as cofactor.

It carries out the reaction ATP-independent breakage of single-stranded DNA, followed by passage and rejoining.. Functionally, releases the supercoiling and torsional tension of DNA introduced during the DNA replication and transcription by transiently cleaving and rejoining one strand of the DNA duplex. Introduces a single-strand break via transesterification at a target site in duplex DNA. The scissile phosphodiester is attacked by the catalytic tyrosine of the enzyme, resulting in the formation of a DNA-(5'-phosphotyrosyl)-enzyme intermediate and the expulsion of a 3'-OH DNA strand. The free DNA strand than undergoes passage around the unbroken strand thus removing DNA supercoils. Finally, in the religation step, the DNA 3'-OH attacks the covalent intermediate to expel the active-site tyrosine and restore the DNA phosphodiester backbone. In Oryza sativa subsp. japonica (Rice), this protein is DNA topoisomerase 3-beta (TOP3B).